The chain runs to 67 residues: Large ribosomal subunit protein bL35 (67 aa).

The segment covering 1–32 has biased composition (basic residues); it reads MPKLKNHSGAKKRFAKTATGKYKRRKAGRKHL. Positions 1 to 54 are disordered; sequence MPKLKNHSGAKKRFAKTATGKYKRRKAGRKHLLTPQSGSRKREMRQTGIIKPES.

This sequence belongs to the bacterial ribosomal protein bL35 family.

This Elusimicrobium minutum (strain Pei191) protein is Large ribosomal subunit protein bL35.